The sequence spans 350 residues: GTPase Obg (350 aa).

In terms of domain architecture, Obg spans 1 to 158 (MFIDSVKITL…RLVRLELKLI (158 aa)). In terms of domain architecture, OBG-type G spans 159-339 (ADVGLVGFPN…LKFMLLEEIK (181 aa)). GTP-binding positions include 165–172 (GFPNVGKS), 190–194 (FTTLT), 212–215 (DIPG), 280–283 (SKSD), and 320–322 (SSL). Residues Ser172 and Thr192 each contribute to the Mg(2+) site.

This sequence belongs to the TRAFAC class OBG-HflX-like GTPase superfamily. OBG GTPase family. In terms of assembly, monomer. Requires Mg(2+) as cofactor.

The protein localises to the cytoplasm. An essential GTPase which binds GTP, GDP and possibly (p)ppGpp with moderate affinity, with high nucleotide exchange rates and a fairly low GTP hydrolysis rate. Plays a role in control of the cell cycle, stress response, ribosome biogenesis and in those bacteria that undergo differentiation, in morphogenesis control. This is GTPase Obg from Campylobacter jejuni subsp. jejuni serotype O:2 (strain ATCC 700819 / NCTC 11168).